The primary structure comprises 308 residues: Ribosomal RNA large subunit methyltransferase F (308 aa).

It belongs to the methyltransferase superfamily. METTL16/RlmF family.

It is found in the cytoplasm. The enzyme catalyses adenosine(1618) in 23S rRNA + S-adenosyl-L-methionine = N(6)-methyladenosine(1618) in 23S rRNA + S-adenosyl-L-homocysteine + H(+). Specifically methylates the adenine in position 1618 of 23S rRNA. The polypeptide is Ribosomal RNA large subunit methyltransferase F (Escherichia coli (strain SMS-3-5 / SECEC)).